A 95-amino-acid chain; its full sequence is Co-chaperonin GroES (95 aa).

It belongs to the GroES chaperonin family. Heptamer of 7 subunits arranged in a ring. Interacts with the chaperonin GroEL.

The protein resides in the cytoplasm. Together with the chaperonin GroEL, plays an essential role in assisting protein folding. The GroEL-GroES system forms a nano-cage that allows encapsulation of the non-native substrate proteins and provides a physical environment optimized to promote and accelerate protein folding. GroES binds to the apical surface of the GroEL ring, thereby capping the opening of the GroEL channel. This chain is Co-chaperonin GroES, found in Aliivibrio salmonicida (strain LFI1238) (Vibrio salmonicida (strain LFI1238)).